Consider the following 206-residue polypeptide: IMPACT family member HI_0722 (206 aa).

It belongs to the IMPACT family.

This is IMPACT family member HI_0722 from Haemophilus influenzae (strain ATCC 51907 / DSM 11121 / KW20 / Rd).